We begin with the raw amino-acid sequence, 928 residues long: Isoleucine--tRNA ligase (928 aa).

The 'HIGH' region signature appears at 57-67 (PFANGNIHMGH). Residue Glu552 coordinates L-isoleucyl-5'-AMP. Residues 593–597 (KMSKS) carry the 'KMSKS' region motif. Lys596 is an ATP binding site. The Zn(2+) site is built by Cys887, Cys890, Cys907, and Cys910.

The protein belongs to the class-I aminoacyl-tRNA synthetase family. IleS type 1 subfamily. As to quaternary structure, monomer. Zn(2+) serves as cofactor.

It localises to the cytoplasm. The catalysed reaction is tRNA(Ile) + L-isoleucine + ATP = L-isoleucyl-tRNA(Ile) + AMP + diphosphate. In terms of biological role, catalyzes the attachment of isoleucine to tRNA(Ile). As IleRS can inadvertently accommodate and process structurally similar amino acids such as valine, to avoid such errors it has two additional distinct tRNA(Ile)-dependent editing activities. One activity is designated as 'pretransfer' editing and involves the hydrolysis of activated Val-AMP. The other activity is designated 'posttransfer' editing and involves deacylation of mischarged Val-tRNA(Ile). The protein is Isoleucine--tRNA ligase of Lacticaseibacillus casei (strain BL23) (Lactobacillus casei).